The sequence spans 221 residues: N-(5'-phosphoribosyl)anthranilate isomerase (221 aa).

The protein belongs to the TrpF family.

The catalysed reaction is N-(5-phospho-beta-D-ribosyl)anthranilate = 1-(2-carboxyphenylamino)-1-deoxy-D-ribulose 5-phosphate. It functions in the pathway amino-acid biosynthesis; L-tryptophan biosynthesis; L-tryptophan from chorismate: step 3/5. This chain is N-(5'-phosphoribosyl)anthranilate isomerase, found in Parabacteroides distasonis (strain ATCC 8503 / DSM 20701 / CIP 104284 / JCM 5825 / NCTC 11152).